The chain runs to 651 residues: MPPMTIKDGEYTATVYKMIKEGRYGDAIHILSKEHQKHTKSRAALSLLGYCYYHMQDFTNAAECYEQLTQLHPEVEDYKLYYAQSLYGACAFPEAMKSTFLLDNTTSHTKMIKLQAAIKYGEEDYSGAKTLVEQLPQEDPDYDVDLGCLLYKEGEFEEACKKFMSSMNVLGYQPDLAYNIALCYYSLKQYASALKYIAEIIERGIREHPELSIGMTTEGIDVRSVGNTLILHETALIEAFNLKAAIEYQLKNYAAAQEALTDMPPRSEEELDPVTLHNQALMNMDTKPTEGFEKLAFLLQQNPFPPVTFGNLLLLYCKYEYFDLAADVLAENAHLTYKFLTPYLYEFLDAMITCQTAPEEAFRKFDENAGKLTEQLRKVTKQVQEARHNRDDESLKKYVQDYDEVLEKYIPVLMAQAKIYWNRENYSMVEKIFHKSLEFCNEHDTWKLNVAHVLFMQDNKYKEAIGFYEPIVKKHYENILNVSAIVLANLCVSYIMTSQNEEAEELMRKIEKEEEQISYDDPDKKIFHLCIVNLVIGTLYCAKGNYDFGISRVIKSLEPYNKKLGTDTWFYAKRCFLSLLENMAKHMIMLRDSVVQECIQFLEHCELYGKDVLAIIEQPLEEDRMHIGKNTVTYESRLIKALFYEVTGWNE.

TPR repeat units follow at residues 8–41, 42–75, 140–173, 175–207, 379–410, 411–443, and 445–478; these read DGEY…HTKS, RAAL…HPEV, PDYD…LGYQ, DLAY…GIRE, VTKQ…EKYI, PVLM…CNEH, and TWKL…HYEN. A coiled-coil region spans residues 494-521; that stretch reads YIMTSQNEEAEELMRKIEKEEEQISYDD. The TPR 8 repeat unit spans residues 530–563; it reads CIVNLVIGTLYCAKGNYDFGISRVIKSLEPYNKK.

It belongs to the TTC30/dfy-1/fleer family. As to expression, localizes to the cilia of many ciliated epithelial cell types including pronephric cells, olfactory placode, the brain ventricle and lateral line organs.

It is found in the cell projection. The protein resides in the cilium. In terms of biological role, plays a role in anterograde intraflagellar transport (IFT), the process by which cilia precursors are transported from the base of the cilium to the site of their incorporation at the tip. Required for polyglutamylation of axonemal tubulin, which is a prerequisite for correct assembly of cilia and for normal cilia beat amplitude. Does not seem to be required for neuronal microtubule polyglutamylation. The polypeptide is Intraflagellar transport protein 70A (ift70a) (Danio rerio (Zebrafish)).